The sequence spans 260 residues: MAAAALRRFWSRRRAEAGDAVVAKPGVWARLGSWARALLRDYAEACRDASAEARARPGRAAVYVGLLGGAAACFTLAPSEGAFEEALLEASGTLLLLAPATRNRESEAFVQRLLWLRGRGRLRYVNLGLCSLVYEAPFDAQASLYQARCRYLQPRWTDFPGRVLDVGFVGRWWVLGAWMRDCDINDDEFLHLPAHLRVVGPQQLHSETNERLFDEKYKPVVLTDDQVDQALWEEQVLQKEKKDRLALSQAHSLVQAEAPR.

Residues 1–31 (MAAAALRRFWSRRRAEAGDAVVAKPGVWARL) constitute a mitochondrion transit peptide. Residues 32 to 59 (GSWARALLRDYAEACRDASAEARARPGR) lie on the Mitochondrial matrix side of the membrane. A helical transmembrane segment spans residues 60 to 77 (AAVYVGLLGGAAACFTLA). Residues 78–260 (PSEGAFEEAL…HSLVQAEAPR (183 aa)) lie on the Mitochondrial intermembrane side of the membrane.

Component of the TIM22 complex, which core is composed of TIMM22, associated with TIMM10 (TIMM10A and/or TIMM10B), TIMM9, AGK and TIMM29. Interacts with TIMM10B; the interaction is direct. Interacts with TOMM40; linking the TIM22 complex to the TOM complex. Interacts with TIMM22 (when oxidized); the interaction is direct.

It localises to the mitochondrion inner membrane. Its function is as follows. Component of the TIM22 complex, a complex that mediates the import and insertion of multi-pass transmembrane proteins into the mitochondrial inner membrane. The TIM22 complex forms a twin-pore translocase that uses the membrane potential as the external driving force. Required for the stability of the TIM22 complex and functions in the assembly of the TIMM22 protein into the TIM22 complex. May facilitate cooperation between TIM22 and TOM complexes by interacting with TOMM40. The polypeptide is Mitochondrial import inner membrane translocase subunit Tim29 (Homo sapiens (Human)).